The following is a 497-amino-acid chain: Cobyric acid synthase (497 aa).

In terms of domain architecture, GATase cobBQ-type spans 251 to 443 (DLKIGVVWYP…LHGLFDNDFF (193 aa)). Residue cysteine 333 is the Nucleophile of the active site. Residue histidine 435 is part of the active site.

This sequence belongs to the CobB/CobQ family. CobQ subfamily.

The protein operates within cofactor biosynthesis; adenosylcobalamin biosynthesis. In terms of biological role, catalyzes amidations at positions B, D, E, and G on adenosylcobyrinic A,C-diamide. NH(2) groups are provided by glutamine, and one molecule of ATP is hydrogenolyzed for each amidation. This chain is Cobyric acid synthase, found in Carboxydothermus hydrogenoformans (strain ATCC BAA-161 / DSM 6008 / Z-2901).